The following is a 388-amino-acid chain: Succinate--CoA ligase [ADP-forming] subunit beta (388 aa).

Residues 9 to 244 (KQLFARSGLP…QSQEDPREAQ (236 aa)) form the ATP-grasp domain. ATP-binding positions include K46, 53–55 (GRG), E99, T102, and E107. N199 and D213 together coordinate Mg(2+). Residues N264 and 321–323 (GIV) contribute to the substrate site.

This sequence belongs to the succinate/malate CoA ligase beta subunit family. Heterotetramer of two alpha and two beta subunits. Mg(2+) serves as cofactor.

The enzyme catalyses succinate + ATP + CoA = succinyl-CoA + ADP + phosphate. The catalysed reaction is GTP + succinate + CoA = succinyl-CoA + GDP + phosphate. Its pathway is carbohydrate metabolism; tricarboxylic acid cycle; succinate from succinyl-CoA (ligase route): step 1/1. Succinyl-CoA synthetase functions in the citric acid cycle (TCA), coupling the hydrolysis of succinyl-CoA to the synthesis of either ATP or GTP and thus represents the only step of substrate-level phosphorylation in the TCA. The beta subunit provides nucleotide specificity of the enzyme and binds the substrate succinate, while the binding sites for coenzyme A and phosphate are found in the alpha subunit. This is Succinate--CoA ligase [ADP-forming] subunit beta from Cronobacter sakazakii (strain ATCC BAA-894) (Enterobacter sakazakii).